Consider the following 288-residue polypeptide: Acetyl-coenzyme A carboxylase carboxyl transferase subunit beta (288 aa).

The CoA carboxyltransferase N-terminal domain occupies 32-288; that stretch reads LFAKCPACKH…LELHTEVENV (257 aa). Residues Cys36, Cys39, Cys54, and Cys57 each contribute to the Zn(2+) site. A C4-type zinc finger spans residues 36–57; that stretch reads CPACKHTIYQKDLGKNKVCPNC.

The protein belongs to the AccD/PCCB family. As to quaternary structure, acetyl-CoA carboxylase is a heterohexamer composed of biotin carboxyl carrier protein (AccB), biotin carboxylase (AccC) and two subunits each of ACCase subunit alpha (AccA) and ACCase subunit beta (AccD). The cofactor is Zn(2+).

The protein resides in the cytoplasm. The catalysed reaction is N(6)-carboxybiotinyl-L-lysyl-[protein] + acetyl-CoA = N(6)-biotinyl-L-lysyl-[protein] + malonyl-CoA. Its pathway is lipid metabolism; malonyl-CoA biosynthesis; malonyl-CoA from acetyl-CoA: step 1/1. Functionally, component of the acetyl coenzyme A carboxylase (ACC) complex. Biotin carboxylase (BC) catalyzes the carboxylation of biotin on its carrier protein (BCCP) and then the CO(2) group is transferred by the transcarboxylase to acetyl-CoA to form malonyl-CoA. The polypeptide is Acetyl-coenzyme A carboxylase carboxyl transferase subunit beta (Lactococcus lactis subsp. lactis (strain IL1403) (Streptococcus lactis)).